A 249-amino-acid polypeptide reads, in one-letter code: Kallikrein-7 (249 aa).

Residues 1–21 (MGVWLLSLITVLLSLALETAG) form the signal peptide. The propeptide at 22–25 (QGER) is activation peptide. Positions 26–246 (IIDGYKCKEG…YKRWVMETMK (221 aa)) are serine protease. 6 disulfides stabilise this stretch: cysteine 32-cysteine 161, cysteine 51-cysteine 67, cysteine 133-cysteine 235, cysteine 140-cysteine 207, cysteine 172-cysteine 186, and cysteine 197-cysteine 222. Residues histidine 66 and aspartate 108 each act as charge relay system in the active site. Serine 201 (charge relay system) is an active-site residue.

Belongs to the peptidase S1 family. Kallikrein subfamily. In terms of tissue distribution, expressed in skin and, at lower levels, in lung, kidney, brain, heart and spleen. In skin, expressed in high suprabasal keratinocytes and in the luminal parts of hair follicles. Not detected in liver and skeletal muscle.

The protein resides in the secreted. It carries out the reaction Cleavage of proteins with aromatic side chains in the P1 position.. Its activity is regulated as follows. Inhibited by Zn2+ and Cu2+ at low micromolar concentrations. Inhibited by SERPINA12. Its function is as follows. May catalyze the degradation of intercellular cohesive structures in the cornified layer of the skin in the continuous shedding of cells from the skin surface. Specific for amino acid residues with aromatic side chains in the P1 position. Cleaves insulin A chain at '14-Tyr-|-Gln-15' and insulin B chain at '6-Leu-|-Cys-7', '16-Tyr-|-Leu-17', '25-Phe-|-Tyr-26' and '26-Tyr-|-Thr-27'. Could play a role in the activation of precursors to inflammatory cytokines. The chain is Kallikrein-7 (Klk7) from Mus musculus (Mouse).